Consider the following 482-residue polypeptide: Bifunctional protein GlmU (482 aa).

Residues 1 to 238 form a pyrophosphorylase region; it reads MSAIRPAAVV…HREIAGINNR (238 aa). Residues 12–15, K26, Q79, and 84–85 contribute to the UDP-N-acetyl-alpha-D-glucosamine site; these read LAAG and GT. Residue D110 participates in Mg(2+) binding. Positions 147, 163, 178, and 236 each coordinate UDP-N-acetyl-alpha-D-glucosamine. N236 is a Mg(2+) binding site. Residues 239–259 are linker; that stretch reads VQLAEARRILNDRLLTRAMLA. Residues 260–482 form an N-acetyltransferase region; sequence GVTVVDPATT…VASRKPEGED (223 aa). UDP-N-acetyl-alpha-D-glucosamine contacts are provided by R341 and K359. H371 acts as the Proton acceptor in catalysis. Residues Y374 and N385 each contribute to the UDP-N-acetyl-alpha-D-glucosamine site. Residues A388, 394–395, S413, A431, and R448 contribute to the acetyl-CoA site; that span reads NY.

The protein in the N-terminal section; belongs to the N-acetylglucosamine-1-phosphate uridyltransferase family. It in the C-terminal section; belongs to the transferase hexapeptide repeat family. As to quaternary structure, homotrimer. Requires Mg(2+) as cofactor.

The protein localises to the cytoplasm. The enzyme catalyses alpha-D-glucosamine 1-phosphate + acetyl-CoA = N-acetyl-alpha-D-glucosamine 1-phosphate + CoA + H(+). It catalyses the reaction N-acetyl-alpha-D-glucosamine 1-phosphate + UTP + H(+) = UDP-N-acetyl-alpha-D-glucosamine + diphosphate. The protein operates within nucleotide-sugar biosynthesis; UDP-N-acetyl-alpha-D-glucosamine biosynthesis; N-acetyl-alpha-D-glucosamine 1-phosphate from alpha-D-glucosamine 6-phosphate (route II): step 2/2. Its pathway is nucleotide-sugar biosynthesis; UDP-N-acetyl-alpha-D-glucosamine biosynthesis; UDP-N-acetyl-alpha-D-glucosamine from N-acetyl-alpha-D-glucosamine 1-phosphate: step 1/1. It participates in bacterial outer membrane biogenesis; LPS lipid A biosynthesis. Catalyzes the last two sequential reactions in the de novo biosynthetic pathway for UDP-N-acetylglucosamine (UDP-GlcNAc). The C-terminal domain catalyzes the transfer of acetyl group from acetyl coenzyme A to glucosamine-1-phosphate (GlcN-1-P) to produce N-acetylglucosamine-1-phosphate (GlcNAc-1-P), which is converted into UDP-GlcNAc by the transfer of uridine 5-monophosphate (from uridine 5-triphosphate), a reaction catalyzed by the N-terminal domain. The sequence is that of Bifunctional protein GlmU from Streptomyces avermitilis (strain ATCC 31267 / DSM 46492 / JCM 5070 / NBRC 14893 / NCIMB 12804 / NRRL 8165 / MA-4680).